A 435-amino-acid chain; its full sequence is Enolase (435 aa).

Glutamine 163 is a (2R)-2-phosphoglycerate binding site. The Proton donor role is filled by glutamate 205. Mg(2+)-binding residues include aspartate 243, glutamate 292, and aspartate 319. (2R)-2-phosphoglycerate is bound by residues lysine 344, arginine 373, serine 374, and lysine 395. Lysine 344 functions as the Proton acceptor in the catalytic mechanism.

It belongs to the enolase family. Requires Mg(2+) as cofactor.

It localises to the cytoplasm. Its subcellular location is the secreted. The protein localises to the cell surface. The catalysed reaction is (2R)-2-phosphoglycerate = phosphoenolpyruvate + H2O. Its pathway is carbohydrate degradation; glycolysis; pyruvate from D-glyceraldehyde 3-phosphate: step 4/5. Its function is as follows. Catalyzes the reversible conversion of 2-phosphoglycerate (2-PG) into phosphoenolpyruvate (PEP). It is essential for the degradation of carbohydrates via glycolysis. The protein is Enolase of Streptococcus suis (strain 98HAH33).